The following is a 329-amino-acid chain: Endonuclease 8-like 2 (329 aa).

Residue proline 2 is the Schiff-base intermediate with DNA of the active site. Catalysis depends on glutamate 3, which acts as the Proton donor. Lysine 50 (proton donor; for beta-elimination activity) is an active-site residue. N6-acetyllysine is present on lysine 50. Serine 68 is modified (phosphoserine). The segment at 68–116 is disordered; the sequence is SLLSEPLREGEQKDKARHHQEASDPSSWSPGGDSAVPSGDDGLQCLGGD. Residues 73–89 show a composition bias toward basic and acidic residues; that stretch reads PLREGEQKDKARHHQEA. Residues 90 to 102 show a composition bias toward low complexity; sequence SDPSSWSPGGDSA. Lysine 149 carries the N6-acetyllysine modification. Asparagine 227 is a DNA binding site. The FPG-type zinc-finger motif lies at 280-316; that stretch reads QIYQKEQCPAGHQVVRESLGPPGGFQRLTWWCPQCQP. The Proton donor; for delta-elimination activity role is filled by arginine 306.

It belongs to the FPG family. Binds EP300.

It is found in the nucleus. It catalyses the reaction 2'-deoxyribonucleotide-(2'-deoxyribose 5'-phosphate)-2'-deoxyribonucleotide-DNA = a 3'-end 2'-deoxyribonucleotide-(2,3-dehydro-2,3-deoxyribose 5'-phosphate)-DNA + a 5'-end 5'-phospho-2'-deoxyribonucleoside-DNA + H(+). Its activity is regulated as follows. Acetylation of Lys-50 leads to loss of DNA nicking activity. In terms of biological role, involved in base excision repair of DNA damaged by oxidation or by mutagenic agents. Has DNA glycosylase activity towards 5-hydroxyuracil and other oxidized derivatives of cytosine with a preference for mismatched double-stranded DNA (DNA bubbles). Has low or no DNA glycosylase activity towards thymine glycol, 2-hydroxyadenine, hypoxanthine and 8-oxoguanine. Has AP (apurinic/apyrimidinic) lyase activity and introduces nicks in the DNA strand. Cleaves the DNA backbone by beta-delta elimination to generate a single-strand break at the site of the removed base with both 3'- and 5'-phosphates. The polypeptide is Endonuclease 8-like 2 (NEIL2) (Bos taurus (Bovine)).